Here is a 208-residue protein sequence, read N- to C-terminus: MADGDIEIKAGFVDTDLDDRKLTMIDDLNNPLAIVERVYLIWWHWADFHLHVISPHIDTITPAIVIEPELISGSNDHEFVYSIHDSGSKLSTSKSQDMFSAGMSMCKLFYTIEKMVHILVDRLKSGGVSMEEEVQIAFAGHEIAQRKAFESIINLPYNVVVTNFDPGIWGEKYLQNVKRLADKGYGYPPESPRENYKHPVSSATTARK.

The interval 184 to 208 (GYGYPPESPRENYKHPVSSATTARK) is disordered.

In terms of assembly, the T4BSS is a complex nanomachine composed of several subcomplexes. This subunit is part of the Type IV Coupling Complex (T4CC), a subcomplex composed of the DotLMNYZ core and the IcmSW-LvgA adapter subunits, linked by the C-terminal tail of DotL.

It is found in the cytoplasm. Functionally, component of the Dot/Icm type IVB secretion system (T4BSS), which is used to inject bacterial effector proteins into eukaryotic host cells. Part of a subcomplex which recruits effector proteins and delivers them to the core transmembrane subcomplex. Is a critical subunit for binding a subset of effector proteins. Recognizes more than one type of binding motif. May be a critical factor that confers host specificity. Necessary for full virulence of the bacterium in guinea pigs and presumably humans. The chain is Type 4 adapter protein LvgA from Legionella pneumophila.